A 193-amino-acid polypeptide reads, in one-letter code: MTETLETPASKIVPRLKTKYADSIKSTLIEEFKYENVNQVPRLVKVVVNMGVGDAAKDSKLIDGAVRDLTLITGQKPQVTKARKSIAQFKLREGMPIGAHATLRGDRMWEFLDRLVTLALPRIRDFRGLSGKQFDGNGNYTFGLTEQVMFHEIDQDSIDRVRGMDITVVTTAKTDDEGRALLKALGFPFKTEA.

This sequence belongs to the universal ribosomal protein uL5 family. Part of the 50S ribosomal subunit; part of the 5S rRNA/L5/L18/L25 subcomplex. Contacts the 5S rRNA and the P site tRNA. Forms a bridge to the 30S subunit in the 70S ribosome.

Functionally, this is one of the proteins that bind and probably mediate the attachment of the 5S RNA into the large ribosomal subunit, where it forms part of the central protuberance. In the 70S ribosome it contacts protein S13 of the 30S subunit (bridge B1b), connecting the 2 subunits; this bridge is implicated in subunit movement. Contacts the P site tRNA; the 5S rRNA and some of its associated proteins might help stabilize positioning of ribosome-bound tRNAs. The chain is Large ribosomal subunit protein uL5 from Arthrobacter sp. (strain FB24).